Reading from the N-terminus, the 320-residue chain is o-succinylbenzoate synthase (320 aa).

K133 (proton donor) is an active-site residue. Positions 161, 190, and 213 each coordinate Mg(2+). The active-site Proton acceptor is K235.

Belongs to the mandelate racemase/muconate lactonizing enzyme family. MenC type 1 subfamily. A divalent metal cation serves as cofactor.

The catalysed reaction is (1R,6R)-6-hydroxy-2-succinyl-cyclohexa-2,4-diene-1-carboxylate = 2-succinylbenzoate + H2O. Its pathway is quinol/quinone metabolism; 1,4-dihydroxy-2-naphthoate biosynthesis; 1,4-dihydroxy-2-naphthoate from chorismate: step 4/7. It participates in quinol/quinone metabolism; menaquinone biosynthesis. Its function is as follows. Converts 2-succinyl-6-hydroxy-2,4-cyclohexadiene-1-carboxylate (SHCHC) to 2-succinylbenzoate (OSB). This chain is o-succinylbenzoate synthase, found in Escherichia fergusonii (strain ATCC 35469 / DSM 13698 / CCUG 18766 / IAM 14443 / JCM 21226 / LMG 7866 / NBRC 102419 / NCTC 12128 / CDC 0568-73).